The primary structure comprises 312 residues: Malate dehydrogenase (312 aa).

NAD(+) contacts are provided by residues 7–13 (GAAGGIG) and D34. Positions 81 and 87 each coordinate substrate. Residues N94 and 117 to 119 (ITN) each bind NAD(+). Substrate-binding residues include N119 and R153. H177 acts as the Proton acceptor in catalysis. An NAD(+)-binding site is contributed by M227.

It belongs to the LDH/MDH superfamily. MDH type 1 family. In terms of assembly, homodimer.

The catalysed reaction is (S)-malate + NAD(+) = oxaloacetate + NADH + H(+). Functionally, catalyzes the reversible oxidation of malate to oxaloacetate. This Escherichia coli O17:K52:H18 (strain UMN026 / ExPEC) protein is Malate dehydrogenase.